Reading from the N-terminus, the 287-residue chain is NADH-cytochrome b5 reductase 1 (287 aa).

Residues 5-25 form a helical membrane-spanning segment; it reads FEALVTALVLAVSFIFIYGKF. One can recognise an FAD-binding FR-type domain in the interval 41–145; the sequence is KDWQEFSLLT…RGPKGFYHYE (105 aa). Residues 125–142 and 151–183 contribute to the FAD site; these read AELA…KGFY and EIGM…RVCL.

It belongs to the flavoprotein pyridine nucleotide cytochrome reductase family. In terms of assembly, monomer. Component of the 2-(3-amino-3-carboxypropyl)histidine synthase complex composed of DPH1, DPH2, DPH3 and a NADH-dependent reductase, predominantly CBR1. It depends on FAD as a cofactor.

Its subcellular location is the mitochondrion outer membrane. The catalysed reaction is 2 Fe(III)-[cytochrome b5] + NADH = 2 Fe(II)-[cytochrome b5] + NAD(+) + H(+). It carries out the reaction 2 Fe(3+)-[Dph3] + NADH = 2 Fe(2+)-[Dph3] + NAD(+) + H(+). It functions in the pathway protein modification; peptidyl-diphthamide biosynthesis. NADH-dependent reductase for DPH3 and cytochrome b5. Required for the first step of diphthamide biosynthesis, a post-translational modification of histidine which occurs in elongation factor 2. DPH1 and DPH2 transfer a 3-amino-3-carboxypropyl (ACP) group from S-adenosyl-L-methionine (SAM) to a histidine residue, the reaction is assisted by a reduction system comprising DPH3 and a NADH-dependent reductase, predominantly CBR1. By reducing DPH3, also involved in the formation of the tRNA wobble base modification mcm5s 2U (5-methoxycarbonylmethyl-2-thiouridine), mediated by the elongator complex. The cytochrome b5/NADH cytochrome b5 reductase electron transfer system supports the catalytic activity of several sterol biosynthetic enzymes. The protein is NADH-cytochrome b5 reductase 1 (CBR1) of Eremothecium gossypii (strain ATCC 10895 / CBS 109.51 / FGSC 9923 / NRRL Y-1056) (Yeast).